The primary structure comprises 194 residues: RNA pyrophosphohydrolase (194 aa).

The Nudix hydrolase domain maps to 6-149 (GFRPNVGIIL…KRDVYQRALQ (144 aa)). A Nudix box motif is present at residues 38–59 (GGIKFGETPEQAMYRELEEEVG). The tract at residues 158–194 (PTQHVPPQHNTARYLRQTHASRKPDEPSTEKTKPDNE) is disordered. The segment covering 179–194 (RKPDEPSTEKTKPDNE) has biased composition (basic and acidic residues).

Belongs to the Nudix hydrolase family. RppH subfamily. The cofactor is a divalent metal cation.

Accelerates the degradation of transcripts by removing pyrophosphate from the 5'-end of triphosphorylated RNA, leading to a more labile monophosphorylated state that can stimulate subsequent ribonuclease cleavage. This chain is RNA pyrophosphohydrolase, found in Janthinobacterium sp. (strain Marseille) (Minibacterium massiliensis).